We begin with the raw amino-acid sequence, 418 residues long: Serine hydroxymethyltransferase (418 aa).

(6S)-5,6,7,8-tetrahydrofolate-binding positions include Leu121 and Gly125–Leu127. N6-(pyridoxal phosphate)lysine is present on Lys230. (6S)-5,6,7,8-tetrahydrofolate is bound by residues Glu246 and Ser355–Phe357.

It belongs to the SHMT family. Homodimer. Requires pyridoxal 5'-phosphate as cofactor.

The protein resides in the cytoplasm. The catalysed reaction is (6R)-5,10-methylene-5,6,7,8-tetrahydrofolate + glycine + H2O = (6S)-5,6,7,8-tetrahydrofolate + L-serine. Its pathway is one-carbon metabolism; tetrahydrofolate interconversion. It functions in the pathway amino-acid biosynthesis; glycine biosynthesis; glycine from L-serine: step 1/1. Catalyzes the reversible interconversion of serine and glycine with tetrahydrofolate (THF) serving as the one-carbon carrier. This reaction serves as the major source of one-carbon groups required for the biosynthesis of purines, thymidylate, methionine, and other important biomolecules. Also exhibits THF-independent aldolase activity toward beta-hydroxyamino acids, producing glycine and aldehydes, via a retro-aldol mechanism. The protein is Serine hydroxymethyltransferase of Streptococcus pneumoniae serotype 4 (strain ATCC BAA-334 / TIGR4).